The chain runs to 567 residues: GBF-interacting protein 1 (567 aa).

Disordered stretches follow at residues 70 to 150, 164 to 192, and 545 to 567; these read ERKK…PSGI, DKVD…SKES, and PIGP…GNNY. Composition is skewed to polar residues over residues 91 to 102 and 121 to 136; these read FASSYTDASNGR and TASS…TKPS. Residues 182 to 191 show a composition bias toward basic and acidic residues; the sequence is DVVEPDKSKE. Residues 550–567 show a composition bias toward polar residues; that stretch reads HVTNQQPQAARTNLGNNY.

The protein belongs to the GIP1 family. As to quaternary structure, monomer, homodimer, homooligomer. Under non-reducing conditions, predominantly present in high molecular weight forms, but predominates in low molecular weight monomers under reducing conditions. Interacts with BZIP16, BZIP68 and GBF1. Interacts with LBD18. In terms of tissue distribution, expressed in roots, leaves, stems and flowers.

The protein localises to the nucleus. Its function is as follows. Plant specific protein that enhances G-box-binding factor (GBF) DNA binding activity. May function as a nuclear chaperone or lever and regulate the multimeric state of GBFs. May contribute to bZIP-mediated gene regulation. Is able to refold denatured rhodanese in vitro. Reduces DNA-binding activity of BZIP16, BZIP68 and GBF1 under non-reducing conditions through direct physical interaction. Acts as a negative co-regulator in red and blue light-mediated hypocotyl elongation. Functions to promote hypocotyl elongation during the early stages of seedling development by regulating the repression effect by BZIP16 and the activation effect by BZIP68 and GBF1 on LHCB2.4 expression. Enhances transcriptional activity of LBD18 in the EXP14 promoter. May act as a transcriptional coactivator of LBD18. The polypeptide is GBF-interacting protein 1 (Arabidopsis thaliana (Mouse-ear cress)).